Consider the following 334-residue polypeptide: MSDGTSKSGSKSSFHFVAGLGSGVLSAALLQPIDLLKTRVQQSPHQNILRTVSEIRHTSPAGLRGLWRGTVPSALRTGFGSALYFSTLNAIRQAAVPLFAHDAAVTTSPNGGNFANNKNNSSRLVKLSNTGNLLAGGVARGFAGFVLMPLTVIKVRYESSLYSYRSIAGAAGDILRTEGPRGFFAGFGATALRDAPYAGLYVLLYEQFKRRLGGVVSSSAAPETNEDNRMGVSRAAAVNFSSGVLAAVACSVVSNPFDAVKTRIQLRPGRYRNMVVAARTMMAEEGARSFFSGLGLRMSRKALSSALAWTLYEELIMRAEVGWSLSSSRTERAM.

Solcar repeat units lie at residues 10–94, 127–211, and 234–318; these read SKSS…IRQA, LSNT…FKRR, and RAAA…LIMR. 6 helical membrane passes run 16 to 41, 69 to 95, 133 to 158, 186 to 209, 238 to 264, and 293 to 311; these read FVAGLGSGVLSAALLQPIDLLKTRVQ, GTVPSALRTGFGSALYFSTLNAIRQAA, LLAGGVARGFAGFVLMPLTVIKVRYE, GFGATALRDAPYAGLYVLLYEQFK, VNFSSGVLAAVACSVVSNPFDAVKTRI, and GLGLRMSRKALSSALAWTL.

Belongs to the mitochondrial carrier (TC 2.A.29) family. SLC25A38 subfamily.

It is found in the mitochondrion inner membrane. The catalysed reaction is glycine(in) = glycine(out). Its function is as follows. Mitochondrial glycine transporter that imports glycine into the mitochondrial matrix. Plays an important role in providing glycine for the first enzymatic step in heme biosynthesis, the condensation of glycine with succinyl-CoA to produce 5-aminolevulinate (ALA) in the mitochondrial matrix. This is Mitochondrial glycine transporter from Pyricularia oryzae (strain 70-15 / ATCC MYA-4617 / FGSC 8958) (Rice blast fungus).